The following is a 573-amino-acid chain: MAQEEVQKSADVAAAPVVKEKPITDKEVTIPTPVAEKEEVAAPVSDEKAVPEKEVTPEKEAPAAEAEKSVSVKEEETVVVAEKVVVLTAEEVQKKALEEFKELVREALNKREFTAPVTPVKEEKTEEKKTEEETKEEEKTEEKKEETTTEVKVEEEKPAVPAAEEEKSSEAAPVETKSEEKPEEKAEVTTEKASSAEEDGTKTVEAIEESIVSVSPPESAVAPVVVETVAVAEAEPVEPEEVSIWGVPLLQDERSDVILTKFLRARDFKVKEALTMLKNTVQWRKENKIDELVESGEEVSEFEKMVFAHGVDKEGHVVIYSSYGEFQNKELFSDKEKLNKFLSWRIQLQEKCVRAIDFSNPEAKSSFVFVSDFRNAPGLGKRALWQFIRRAVKQFEDNYPEFAAKELFINVPWWYIPYYKTFGSIITSPRTRSKMVLAGPSKSADTIFKYIAPEQVPVKYGGLSKDTPLTEETITEAIVKPAANYTIELPASEACTLSWELRVLGADVSYGAQFEPTTEGSYAVIVSKTRKIGSTDEPVITDSFKVGEPGKIVITIDNQTSKKKKVLYRFKTQ.

Disordered regions lie at residues 1 to 74 and 111 to 202; these read MAQE…SVKE and REFT…DGTK. A2 carries the N-acetylalanine modification. Basic and acidic residues predominate over residues 18–28; it reads VKEKPITDKEV. T29 is modified (phosphothreonine). Basic and acidic residues predominate over residues 35 to 74; that stretch reads AEKEEVAAPVSDEKAVPEKEVTPEKEAPAAEAEKSVSVKE. Residues 89-157 are a coiled coil; that stretch reads AEEVQKKALE…TTEVKVEEEK (69 aa). T118 carries the post-translational modification Phosphothreonine. Composition is skewed to basic and acidic residues over residues 120-169 and 176-190; these read VKEE…EKSS and TKSE…EVTT. The residue at position 195 (S195) is a Phosphoserine. Residue K285 forms a Glycyl lysine isopeptide (Lys-Gly) (interchain with G-Cter in ubiquitin) linkage. One can recognise a CRAL-TRIO domain in the interval 295-468; sequence SGEEVSEFEK…KYGGLSKDTP (174 aa). One can recognise a GOLD domain in the interval 471 to 572; sequence EETITEAIVK…KKKVLYRFKT (102 aa).

It belongs to the patellin family. In terms of assembly, interacts with the deubiquitinating enzyme AMSH3. Expressed ubiquitously with higher levels in expanding roots and leaves (at protein level).

It is found in the membrane. The protein resides in the cytoplasm. Functionally, carrier protein that may be involved in membrane-trafficking events associated with cell plate formation during cytokinesis. Binds to some hydrophobic molecules and promotes their transfer between the different cellular sites. Binds to phosphoinositides with a preference for PtdIns(5)P, PtdIns(4,5)P2 and PtdIns(3)P. The chain is Patellin-1 (PATL1) from Arabidopsis thaliana (Mouse-ear cress).